We begin with the raw amino-acid sequence, 151 residues long: UPF0735 ACT domain-containing protein SH1278 (151 aa).

Residues 74-149 (TLILYVNDIV…HVSKVELISM (76 aa)) enclose the ACT domain.

This sequence belongs to the UPF0735 family.

The chain is UPF0735 ACT domain-containing protein SH1278 from Staphylococcus haemolyticus (strain JCSC1435).